The sequence spans 1399 residues: DNA-directed RNA polymerase subunit beta' (1399 aa).

The Zn(2+) site is built by Cys-70, Cys-72, Cys-85, and Cys-88. Residues Asp-460, Asp-462, and Asp-464 each coordinate Mg(2+). The Zn(2+) site is built by Cys-814, Cys-888, Cys-895, and Cys-898.

The protein belongs to the RNA polymerase beta' chain family. The RNAP catalytic core consists of 2 alpha, 1 beta, 1 beta' and 1 omega subunit. When a sigma factor is associated with the core the holoenzyme is formed, which can initiate transcription. Mg(2+) is required as a cofactor. The cofactor is Zn(2+).

The catalysed reaction is RNA(n) + a ribonucleoside 5'-triphosphate = RNA(n+1) + diphosphate. DNA-dependent RNA polymerase catalyzes the transcription of DNA into RNA using the four ribonucleoside triphosphates as substrates. In Pseudomonas syringae pv. syringae (strain B728a), this protein is DNA-directed RNA polymerase subunit beta'.